The primary structure comprises 462 residues: Putative E3 ubiquitin-protein ligase XBAT35 (462 aa).

3 ANK repeats span residues 6 to 35 (SKGE…DLEW), 39 to 69 (EGKT…NVNA), and 75 to 104 (HAGT…NPLV). Disordered stretches follow at residues 277–341 (HPPV…GKAS) and 356–402 (SSPS…EGER). The segment covering 304–317 (SLHTTMSDPSNLNH) has biased composition (polar residues). A compositionally biased stretch (low complexity) spans 319-341 (SIGQASSSSGPSSSTAPPSGKAS). Residues 411–450 (CAICLDAPSEAVCVPCGHVAGCMSCLKEIKSKNWGCPVCR) form an RING-type zinc finger.

The enzyme catalyses S-ubiquitinyl-[E2 ubiquitin-conjugating enzyme]-L-cysteine + [acceptor protein]-L-lysine = [E2 ubiquitin-conjugating enzyme]-L-cysteine + N(6)-ubiquitinyl-[acceptor protein]-L-lysine.. Its pathway is protein modification; protein ubiquitination. No E3 ubiquitin-protein ligase activity observed when associated with the E2 enzyme UBC8 in vitro. The polypeptide is Putative E3 ubiquitin-protein ligase XBAT35 (XBAT35) (Arabidopsis thaliana (Mouse-ear cress)).